Consider the following 230-residue polypeptide: Demethylluteothin O-methyltransferase (230 aa).

This sequence belongs to the methyltransferase superfamily.

It carries out the reaction demethylluteothin + S-adenosyl-L-methionine = luteothin + S-adenosyl-L-homocysteine. The protein operates within antibiotic biosynthesis. It participates in polyketide biosynthesis. Its function is as follows. Methyltransferase involved in the biosynthesis of the antibiotic aureothin, a nitroaryl polyketide metabolite with antifungal, cytotoxic and insecticidal activities. Catalyzes the methylation of demethylluteothin to luteothin (also called deoxyaureothin). Is specific for its gamma-pyrone substrate, and does not act on the alpha-pyrone isomer. The sequence is that of Demethylluteothin O-methyltransferase from Streptomyces thioluteus.